We begin with the raw amino-acid sequence, 300 residues long: Epimerase family protein MW0731 (300 aa).

It belongs to the NAD(P)-dependent epimerase/dehydratase family. SDR39U1 subfamily.

This is Epimerase family protein MW0731 from Staphylococcus aureus (strain MW2).